Consider the following 1269-residue polypeptide: DNA-directed RNA polymerase subunit beta (1269 aa).

Belongs to the RNA polymerase beta chain family. The RNAP catalytic core consists of 2 alpha, 1 beta, 1 beta' and 1 omega subunit. When a sigma factor is associated with the core the holoenzyme is formed, which can initiate transcription.

It carries out the reaction RNA(n) + a ribonucleoside 5'-triphosphate = RNA(n+1) + diphosphate. DNA-dependent RNA polymerase catalyzes the transcription of DNA into RNA using the four ribonucleoside triphosphates as substrates. In Porphyromonas gingivalis (strain ATCC BAA-308 / W83), this protein is DNA-directed RNA polymerase subunit beta.